Consider the following 59-residue polypeptide: Anti-inflammatory peptide amregulin (59 aa).

The N-terminal stretch at 1 to 19 is a signal peptide; that stretch reads MKLHMLNMLNCLLLTVCDG.

Salivary glands.

Its subcellular location is the secreted. Its function is as follows. Anti-inflammatory peptide that may facilitate successful blood feeding of ticks and may lead to immunotolerance in its host. Inhibits the secretion of inflammatory factors in rat splenocytes, such as tumor necrosis factor-alpha (TNF), interleukin-1, interleukin-8 (CXCL8) and interferon-gamma (IFNG). In addition, shows strong free radical scavenging and antioxidant activities in vitro. In vivo, inhibits adjuvant-induced paw inflammation in mouse models. This is Anti-inflammatory peptide amregulin from Amblyomma variegatum (Tropical bont tick).